The sequence spans 271 residues: Orotidine 5'-phosphate decarboxylase (271 aa).

Catalysis depends on lysine 97, which acts as the Proton donor.

The protein belongs to the OMP decarboxylase family. Type 2 subfamily.

The enzyme catalyses orotidine 5'-phosphate + H(+) = UMP + CO2. It functions in the pathway pyrimidine metabolism; UMP biosynthesis via de novo pathway; UMP from orotate: step 2/2. This Leptospira borgpetersenii serovar Hardjo-bovis (strain JB197) protein is Orotidine 5'-phosphate decarboxylase.